Reading from the N-terminus, the 389-residue chain is S-adenosylmethionine synthase (389 aa).

His15 provides a ligand contact to ATP. Residue Asp17 participates in Mg(2+) binding. Glu43 is a binding site for K(+). L-methionine is bound by residues Glu56 and Gln99. Residues 99–109 (QSPDIAQGVNE) are flexible loop. ATP is bound by residues 166-168 (DAK), 234-235 (RF), Asp243, 249-250 (RK), Ala266, and Lys270. Asp243 lines the L-methionine pocket. Lys274 provides a ligand contact to L-methionine.

The protein belongs to the AdoMet synthase family. Homotetramer; dimer of dimers. Mg(2+) serves as cofactor. It depends on K(+) as a cofactor.

Its subcellular location is the cytoplasm. It catalyses the reaction L-methionine + ATP + H2O = S-adenosyl-L-methionine + phosphate + diphosphate. Its pathway is amino-acid biosynthesis; S-adenosyl-L-methionine biosynthesis; S-adenosyl-L-methionine from L-methionine: step 1/1. In terms of biological role, catalyzes the formation of S-adenosylmethionine (AdoMet) from methionine and ATP. The overall synthetic reaction is composed of two sequential steps, AdoMet formation and the subsequent tripolyphosphate hydrolysis which occurs prior to release of AdoMet from the enzyme. The sequence is that of S-adenosylmethionine synthase from Neisseria gonorrhoeae (strain NCCP11945).